The chain runs to 400 residues: Enoyl-[acyl-carrier-protein] reductase [NADH] (400 aa).

NAD(+) contacts are provided by residues Gly48 to Tyr53, Phe74 to Glu75, Asp111 to Ala112, and Leu139 to Ala140. Tyr225 serves as a coordination point for substrate. Catalysis depends on Tyr235, which acts as the Proton donor. Residues Lys244 and Val273–Thr275 each bind NAD(+).

It belongs to the TER reductase family. Monomer.

It catalyses the reaction a 2,3-saturated acyl-[ACP] + NAD(+) = a (2E)-enoyl-[ACP] + NADH + H(+). It functions in the pathway lipid metabolism; fatty acid biosynthesis. In terms of biological role, involved in the final reduction of the elongation cycle of fatty acid synthesis (FAS II). Catalyzes the reduction of a carbon-carbon double bond in an enoyl moiety that is covalently linked to an acyl carrier protein (ACP). The protein is Enoyl-[acyl-carrier-protein] reductase [NADH] of Burkholderia vietnamiensis (strain G4 / LMG 22486) (Burkholderia cepacia (strain R1808)).